We begin with the raw amino-acid sequence, 298 residues long: Syntenin-1 (298 aa).

N-acetylserine is present on Ser2. The interval 2-60 (SLYPSLEDLKVDKVIQAQTAFSANPANPAILSEASAPIPHDGNLYPRLYPELSQYMGLS) is interaction with PDCD6IP. Short sequence motifs (LYPX(n)L motif) lie at residues 3–7 (LYPSL), 45–49 (LYPRL), and 49–53 (LYPEL). Ser6 is modified (phosphoserine). Position 46 is a phosphotyrosine (Tyr46). 2 consecutive PDZ domains span residues 114–193 (EVIL…IRDR) and 198–273 (TITM…MPAF). Residues Asn215 and 250–251 (KD) contribute to the a 1,2-diacyl-sn-glycero-3-phospho-(1D-myo-inositol-4,5-bisphosphate) site.

Monomer and homodimer. Interacts with SDC1, SDC2, SDC3, SDC4, NRXN2, EPHA7, EPHB1, NF2 isoform 1, TGFA and IL5RA. Interacts with NFASC and PTPRJ. Interacts with SDCBP2. Interacts with PDCD6IP. Forms a complex with PDCD6IP and SDC2. Interacts (via C-terminus) with TGFBR1. Binds to FZD7; this interaction is increased by inositol trisphosphate (IP3). Interacts with SMO. Phosphorylated on tyrosine residues. As to expression, expressed in lung cancers, including adenocarcinoma, squamous cell carcinoma and small-cell carcinoma (at protein level). Widely expressed. Expressed in fetal kidney, liver, lung and brain. In adult highest expression in heart and placenta.

Its subcellular location is the cell junction. It is found in the focal adhesion. It localises to the adherens junction. The protein resides in the cell membrane. The protein localises to the endoplasmic reticulum membrane. Its subcellular location is the nucleus. It is found in the melanosome. It localises to the cytoplasm. The protein resides in the cytosol. The protein localises to the cytoskeleton. Its subcellular location is the secreted. It is found in the extracellular exosome. It localises to the membrane raft. Multifunctional adapter protein involved in diverse array of functions including trafficking of transmembrane proteins, neuro and immunomodulation, exosome biogenesis, and tumorigenesis. Positively regulates TGFB1-mediated SMAD2/3 activation and TGFB1-induced epithelial-to-mesenchymal transition (EMT) and cell migration in various cell types. May increase TGFB1 signaling by enhancing cell-surface expression of TGFR1 by preventing the interaction between TGFR1 and CAV1 and subsequent CAV1-dependent internalization and degradation of TGFR1. In concert with SDC1/4 and PDCD6IP, regulates exosome biogenesis. Regulates migration, growth, proliferation, and cell cycle progression in a variety of cancer types. In adherens junctions may function to couple syndecans to cytoskeletal proteins or signaling components. Seems to couple transcription factor SOX4 to the IL-5 receptor (IL5RA). May also play a role in vesicular trafficking. Seems to be required for the targeting of TGFA to the cell surface in the early secretory pathway. This chain is Syntenin-1 (SDCBP), found in Homo sapiens (Human).